A 208-amino-acid polypeptide reads, in one-letter code: Mediator of RNA polymerase II transcription subunit 18 (208 aa).

Ser-66 carries the phosphoserine modification.

The protein belongs to the Mediator complex subunit 18 family. Component of the Mediator complex, which is composed of MED1, MED4, MED6, MED7, MED8, MED9, MED10, MED11, MED12, MED13, MED13L, MED14, MED15, MED16, MED17, MED18, MED19, MED20, MED21, MED22, MED23, MED24, MED25, MED26, MED27, MED29, MED30, MED31, CCNC, CDK8 and CDC2L6/CDK11. The MED12, MED13, CCNC and CDK8 subunits form a distinct module termed the CDK8 module. Mediator containing the CDK8 module is less active than Mediator lacking this module in supporting transcriptional activation. Individual preparations of the Mediator complex lacking one or more distinct subunits have been variously termed ARC, CRSP, DRIP, PC2, SMCC and TRAP.

It localises to the nucleus. Its function is as follows. Component of the Mediator complex, a coactivator involved in the regulated transcription of nearly all RNA polymerase II-dependent genes. Mediator functions as a bridge to convey information from gene-specific regulatory proteins to the basal RNA polymerase II transcription machinery. Mediator is recruited to promoters by direct interactions with regulatory proteins and serves as a scaffold for the assembly of a functional preinitiation complex with RNA polymerase II and the general transcription factors. The protein is Mediator of RNA polymerase II transcription subunit 18 (MED18) of Homo sapiens (Human).